The chain runs to 232 residues: 5'-methylthioadenosine/S-adenosylhomocysteine nucleosidase (232 aa).

Residue glutamate 12 is the Proton acceptor of the active site. Substrate contacts are provided by residues glycine 78, valine 152, and 173-174; that span reads ME. The Proton donor role is filled by aspartate 197.

Belongs to the PNP/UDP phosphorylase family. MtnN subfamily. As to quaternary structure, homodimer.

It carries out the reaction S-adenosyl-L-homocysteine + H2O = S-(5-deoxy-D-ribos-5-yl)-L-homocysteine + adenine. The catalysed reaction is S-methyl-5'-thioadenosine + H2O = 5-(methylsulfanyl)-D-ribose + adenine. The enzyme catalyses 5'-deoxyadenosine + H2O = 5-deoxy-D-ribose + adenine. It participates in amino-acid biosynthesis; L-methionine biosynthesis via salvage pathway; S-methyl-5-thio-alpha-D-ribose 1-phosphate from S-methyl-5'-thioadenosine (hydrolase route): step 1/2. Its function is as follows. Catalyzes the irreversible cleavage of the glycosidic bond in both 5'-methylthioadenosine (MTA) and S-adenosylhomocysteine (SAH/AdoHcy) to adenine and the corresponding thioribose, 5'-methylthioribose and S-ribosylhomocysteine, respectively. Also cleaves 5'-deoxyadenosine, a toxic by-product of radical S-adenosylmethionine (SAM) enzymes, into 5-deoxyribose and adenine. Thus, is required for in vivo function of the radical SAM enzymes biotin synthase and lipoic acid synthase, that are inhibited by 5'-deoxyadenosine accumulation. The polypeptide is 5'-methylthioadenosine/S-adenosylhomocysteine nucleosidase (Buchnera aphidicola subsp. Acyrthosiphon pisum (strain 5A)).